A 206-amino-acid polypeptide reads, in one-letter code: dITP/XTP pyrophosphatase (206 aa).

7–12 (SRNPKK) lines the substrate pocket. The active-site Proton acceptor is the D72. D72 provides a ligand contact to Mg(2+). Substrate contacts are provided by residues S73, 155 to 158 (FGYD), K178, and 183 to 184 (HR).

Belongs to the HAM1 NTPase family. As to quaternary structure, homodimer. Mg(2+) serves as cofactor.

The catalysed reaction is XTP + H2O = XMP + diphosphate + H(+). It catalyses the reaction dITP + H2O = dIMP + diphosphate + H(+). It carries out the reaction ITP + H2O = IMP + diphosphate + H(+). Its function is as follows. Pyrophosphatase that catalyzes the hydrolysis of nucleoside triphosphates to their monophosphate derivatives, with a high preference for the non-canonical purine nucleotides XTP (xanthosine triphosphate), dITP (deoxyinosine triphosphate) and ITP. Seems to function as a house-cleaning enzyme that removes non-canonical purine nucleotides from the nucleotide pool, thus preventing their incorporation into DNA/RNA and avoiding chromosomal lesions. The chain is dITP/XTP pyrophosphatase from Mycobacteroides abscessus (strain ATCC 19977 / DSM 44196 / CCUG 20993 / CIP 104536 / JCM 13569 / NCTC 13031 / TMC 1543 / L948) (Mycobacterium abscessus).